The sequence spans 537 residues: Zinc finger and BTB domain-containing protein 18 (537 aa).

Positions 24–91 constitute a BTB domain; the sequence is CDSTVLVGDA…MYEGKLQFKS (68 aa). Positions 122–143 are enriched in basic and acidic residues; it reads TAEADSTKREEDTSSCSDKVES. 2 disordered regions span residues 122 to 232 and 335 to 355; these read TAEA…RVSA and ASELERDDKGGDDDTDVLGGD. Composition is skewed to low complexity over residues 182–195 and 208–229; these read RLPSDRTTSPTTSP and SPAGSPSSSSGSLSRRSAASRR. C2H2-type zinc fingers lie at residues 385–407, 425–447, 453–475, and 481–504; these read FMCPLCNKVFPSPHILQIHLSTH, PTCSICGKTFSCMYTLKRHERTH, YTCTTCGKSFQYSHNLSRHAVVH, and HACKWCERRFTQSGDLYRHIRKFH.

Belongs to the krueppel C2H2-type zinc-finger protein family. ZBTB18 subfamily.

It is found in the nucleus. Functionally, transcriptional repressor that plays a role in various developmental processes. Specifically binds the consensus DNA sequence 5'-[AC]ACATCTG[GT][AC]-3' which contains the E box core, and acts by recruiting chromatin remodeling multiprotein complexes. The protein is Zinc finger and BTB domain-containing protein 18 (zbtb18) of Danio rerio (Zebrafish).